Here is an 85-residue protein sequence, read N- to C-terminus: Colicin-E8 immunity protein in ColE6 (85 aa).

Belongs to the colicins ColE2/ColE8/ColE9 and pyocins S1/S2 family.

In Escherichia coli, this protein is Colicin-E8 immunity protein in ColE6 (imm).